The sequence spans 493 residues: Rho guanine nucleotide exchange factor 9 (493 aa).

The 60-residue stretch at 15–74 (DSIVSAEAVWDHVTMANRGVAFKAGDVIKVLDASNKDWWWGQIDDEEGWFPASFVRLWVN) folds into the SH3 domain. Residues 107-117 (RDQMRANVINE) are interaction with GPHN. The DH domain occupies 110–294 (MRANVINEIM…RNVTQQINER (185 aa)). Residues 325-432 (ELIYTGEMAW…WLRAFREERK (108 aa)) enclose the PH domain. The disordered stretch occupies residues 453 to 473 (AMTVRKASKQKGRVGEEENQS).

In terms of assembly, interacts with GPHN. In terms of tissue distribution, detected in brain, throughout the gray matter. Detected at low levels in heart and skeletal muscle.

It localises to the cytoplasm. The protein resides in the postsynaptic density. In terms of biological role, acts as a guanine nucleotide exchange factor (GEF) for CDC42. Promotes formation of GPHN clusters. The protein is Rho guanine nucleotide exchange factor 9 (Arhgef9) of Rattus norvegicus (Rat).